We begin with the raw amino-acid sequence, 258 residues long: Indole-3-glycerol phosphate synthase (258 aa).

It belongs to the TrpC family.

The catalysed reaction is 1-(2-carboxyphenylamino)-1-deoxy-D-ribulose 5-phosphate + H(+) = (1S,2R)-1-C-(indol-3-yl)glycerol 3-phosphate + CO2 + H2O. The protein operates within amino-acid biosynthesis; L-tryptophan biosynthesis; L-tryptophan from chorismate: step 4/5. In Legionella pneumophila (strain Lens), this protein is Indole-3-glycerol phosphate synthase.